Reading from the N-terminus, the 665-residue chain is Translation factor guf1, mitochondrial (665 aa).

A mitochondrion-targeting transit peptide spans 1-53 (MRGCLQVLRWLSTSPARRPVSSGLRLRSYEIVSPSILRPFTSTVRRQAQASRN). The tr-type G domain occupies 67–247 (ERFRNFCIVA…TVIERIPAPV (181 aa)). Residues 76–83 (AHVDHGKS), 140–144 (DTPGH), and 194–197 (NKVD) each bind GTP.

It belongs to the TRAFAC class translation factor GTPase superfamily. Classic translation factor GTPase family. LepA subfamily.

The protein resides in the mitochondrion inner membrane. It catalyses the reaction GTP + H2O = GDP + phosphate + H(+). Promotes mitochondrial protein synthesis. May act as a fidelity factor of the translation reaction, by catalyzing a one-codon backward translocation of tRNAs on improperly translocated ribosomes. Binds to mitochondrial ribosomes in a GTP-dependent manner. The chain is Translation factor guf1, mitochondrial (guf1) from Talaromyces stipitatus (strain ATCC 10500 / CBS 375.48 / QM 6759 / NRRL 1006) (Penicillium stipitatum).